The sequence spans 175 residues: Two-on-two hemoglobin-3 (175 aa).

Tyrosine 85 and histidine 98 together coordinate heme. Residues 153–175 (QNEKPKHKPQCACKHAANKPAEE) are disordered.

The protein belongs to the truncated hemoglobin family. Group II subfamily. In terms of assembly, homodimer when ferric. Interacts with RGLG3 and RGLG4. Heme is required as a cofactor. In terms of tissue distribution, expressed ubiquitously, with higher levels in root tissue than in shoot tissue.

Hemoglobin-like protein that exhibits an unusual concentration-independent binding of O(2) and CO. May promote shoot organogenesis from root explants in vitro. Inhibits RGLG3 and RGLG4 ubiquitination activity. In Arabidopsis thaliana (Mouse-ear cress), this protein is Two-on-two hemoglobin-3 (GLB3).